Consider the following 1411-residue polypeptide: DNA-directed RNA polymerase subunit beta' (1411 aa).

Positions 69, 71, 84, and 87 each coordinate Zn(2+). Residues D461, D463, and D465 each contribute to the Mg(2+) site. The Zn(2+) site is built by C809, C883, C890, and C893.

The protein belongs to the RNA polymerase beta' chain family. As to quaternary structure, the RNAP catalytic core consists of 2 alpha, 1 beta, 1 beta' and 1 omega subunit. When a sigma factor is associated with the core the holoenzyme is formed, which can initiate transcription. Mg(2+) serves as cofactor. It depends on Zn(2+) as a cofactor.

It carries out the reaction RNA(n) + a ribonucleoside 5'-triphosphate = RNA(n+1) + diphosphate. DNA-dependent RNA polymerase catalyzes the transcription of DNA into RNA using the four ribonucleoside triphosphates as substrates. The sequence is that of DNA-directed RNA polymerase subunit beta' from Ehrlichia ruminantium (strain Welgevonden).